Reading from the N-terminus, the 307-residue chain is Methionyl-tRNA formyltransferase (307 aa).

110 to 113 is a binding site for (6S)-5,6,7,8-tetrahydrofolate; the sequence is SLLP.

This sequence belongs to the Fmt family.

The catalysed reaction is L-methionyl-tRNA(fMet) + (6R)-10-formyltetrahydrofolate = N-formyl-L-methionyl-tRNA(fMet) + (6S)-5,6,7,8-tetrahydrofolate + H(+). Attaches a formyl group to the free amino group of methionyl-tRNA(fMet). The formyl group appears to play a dual role in the initiator identity of N-formylmethionyl-tRNA by promoting its recognition by IF2 and preventing the misappropriation of this tRNA by the elongation apparatus. This is Methionyl-tRNA formyltransferase from Rhodococcus erythropolis (strain PR4 / NBRC 100887).